The sequence spans 565 residues: Proline--tRNA ligase (565 aa).

It belongs to the class-II aminoacyl-tRNA synthetase family. ProS type 1 subfamily. In terms of assembly, homodimer.

It localises to the cytoplasm. The catalysed reaction is tRNA(Pro) + L-proline + ATP = L-prolyl-tRNA(Pro) + AMP + diphosphate. Its function is as follows. Catalyzes the attachment of proline to tRNA(Pro) in a two-step reaction: proline is first activated by ATP to form Pro-AMP and then transferred to the acceptor end of tRNA(Pro). As ProRS can inadvertently accommodate and process non-cognate amino acids such as alanine and cysteine, to avoid such errors it has two additional distinct editing activities against alanine. One activity is designated as 'pretransfer' editing and involves the tRNA(Pro)-independent hydrolysis of activated Ala-AMP. The other activity is designated 'posttransfer' editing and involves deacylation of mischarged Ala-tRNA(Pro). The misacylated Cys-tRNA(Pro) is not edited by ProRS. This chain is Proline--tRNA ligase, found in Lactobacillus gasseri (strain ATCC 33323 / DSM 20243 / BCRC 14619 / CIP 102991 / JCM 1131 / KCTC 3163 / NCIMB 11718 / NCTC 13722 / AM63).